We begin with the raw amino-acid sequence, 145 residues long: Nickel-responsive regulator (145 aa).

Ni(2+)-binding residues include His-77, His-88, His-90, and Cys-96.

Belongs to the transcriptional regulatory CopG/NikR family. Homotetramer. Ni(2+) serves as cofactor.

Functionally, transcriptional repressor of the nikABCDE operon. Is active in the presence of excessive concentrations of intracellular nickel. This chain is Nickel-responsive regulator, found in Edwardsiella ictaluri (strain 93-146).